The following is a 193-amino-acid chain: Xanthine phosphoribosyltransferase (193 aa).

2 residues coordinate xanthine: L20 and T27. 128 to 132 (ANGQA) is a binding site for 5-phospho-alpha-D-ribose 1-diphosphate. K156 provides a ligand contact to xanthine.

The protein belongs to the purine/pyrimidine phosphoribosyltransferase family. Xpt subfamily. Homodimer.

It localises to the cytoplasm. The enzyme catalyses XMP + diphosphate = xanthine + 5-phospho-alpha-D-ribose 1-diphosphate. Its pathway is purine metabolism; XMP biosynthesis via salvage pathway; XMP from xanthine: step 1/1. Functionally, converts the preformed base xanthine, a product of nucleic acid breakdown, to xanthosine 5'-monophosphate (XMP), so it can be reused for RNA or DNA synthesis. The sequence is that of Xanthine phosphoribosyltransferase from Streptococcus pyogenes serotype M3 (strain ATCC BAA-595 / MGAS315).